The following is a 465-amino-acid chain: Cysteine--tRNA ligase (465 aa).

Residue cysteine 30 coordinates Zn(2+). Positions 32–42 (ITVYDYCHVGH) match the 'HIGH' region motif. Zn(2+) is bound by residues cysteine 214, histidine 239, and glutamate 243. The 'KMSKS' region motif lies at 271 to 275 (KMSKS). ATP is bound at residue lysine 274.

Belongs to the class-I aminoacyl-tRNA synthetase family. As to quaternary structure, monomer. Zn(2+) serves as cofactor.

Its subcellular location is the cytoplasm. The catalysed reaction is tRNA(Cys) + L-cysteine + ATP = L-cysteinyl-tRNA(Cys) + AMP + diphosphate. The protein is Cysteine--tRNA ligase of Burkholderia cenocepacia (strain HI2424).